A 297-amino-acid polypeptide reads, in one-letter code: Bifunctional protein FolD 2 (297 aa).

NADP(+)-binding positions include 164-166, Ser-193, and Ile-234; that span reads GRS.

The protein belongs to the tetrahydrofolate dehydrogenase/cyclohydrolase family. As to quaternary structure, homodimer.

The enzyme catalyses (6R)-5,10-methylene-5,6,7,8-tetrahydrofolate + NADP(+) = (6R)-5,10-methenyltetrahydrofolate + NADPH. It catalyses the reaction (6R)-5,10-methenyltetrahydrofolate + H2O = (6R)-10-formyltetrahydrofolate + H(+). The protein operates within one-carbon metabolism; tetrahydrofolate interconversion. In terms of biological role, catalyzes the oxidation of 5,10-methylenetetrahydrofolate to 5,10-methenyltetrahydrofolate and then the hydrolysis of 5,10-methenyltetrahydrofolate to 10-formyltetrahydrofolate. The polypeptide is Bifunctional protein FolD 2 (Haloarcula marismortui (strain ATCC 43049 / DSM 3752 / JCM 8966 / VKM B-1809) (Halobacterium marismortui)).